The following is a 120-amino-acid chain: Large ribosomal subunit protein uL29A (120 aa).

Residues serine 13 and serine 50 each carry the phosphoserine modification.

It belongs to the universal ribosomal protein uL29 family. In terms of assembly, component of the large ribosomal subunit (LSU). Mature yeast ribosomes consist of a small (40S) and a large (60S) subunit. The 40S small subunit contains 1 molecule of ribosomal RNA (18S rRNA) and 33 different proteins (encoded by 57 genes). The large 60S subunit contains 3 rRNA molecules (25S, 5.8S and 5S rRNA) and 46 different proteins (encoded by 81 genes). uL29 is associated with the polypeptide exit tunnel.

The protein resides in the cytoplasm. Functionally, component of the ribosome, a large ribonucleoprotein complex responsible for the synthesis of proteins in the cell. The small ribosomal subunit (SSU) binds messenger RNAs (mRNAs) and translates the encoded message by selecting cognate aminoacyl-transfer RNA (tRNA) molecules. The large subunit (LSU) contains the ribosomal catalytic site termed the peptidyl transferase center (PTC), which catalyzes the formation of peptide bonds, thereby polymerizing the amino acids delivered by tRNAs into a polypeptide chain. The nascent polypeptides leave the ribosome through a tunnel in the LSU and interact with protein factors that function in enzymatic processing, targeting, and the membrane insertion of nascent chains at the exit of the ribosomal tunnel. The protein is Large ribosomal subunit protein uL29A of Saccharomyces cerevisiae (strain ATCC 204508 / S288c) (Baker's yeast).